Consider the following 127-residue polypeptide: 3-aminoacrylate deaminase RutC (127 aa).

The protein belongs to the RutC family.

The enzyme catalyses (Z)-3-aminoacrylate + H2O + H(+) = 3-oxopropanoate + NH4(+). Its function is as follows. Involved in pyrimidine catabolism. Catalyzes the deamination of 3-aminoacrylate to malonic semialdehyde, a reaction that can also occur spontaneously. RutC may facilitate the reaction and modulate the metabolic fitness, rather than catalyzing essential functions. The chain is 3-aminoacrylate deaminase RutC from Pseudomonas savastanoi pv. phaseolicola (strain 1448A / Race 6) (Pseudomonas syringae pv. phaseolicola (strain 1448A / Race 6)).